Consider the following 262-residue polypeptide: uncharacterized protein (262 aa).

This is an uncharacterized protein from Mycobacterium tuberculosis (strain CDC 1551 / Oshkosh).